A 255-amino-acid chain; its full sequence is 1-acyl-sn-glycerol-3-phosphate acyltransferase (255 aa).

The HXXXXD motif motif lies at 78–83; sequence HVSWLD.

It belongs to the 1-acyl-sn-glycerol-3-phosphate acyltransferase family.

It is found in the cell inner membrane. It catalyses the reaction a 1-acyl-sn-glycero-3-phosphate + an acyl-CoA = a 1,2-diacyl-sn-glycero-3-phosphate + CoA. Its pathway is phospholipid metabolism; CDP-diacylglycerol biosynthesis; CDP-diacylglycerol from sn-glycerol 3-phosphate: step 2/3. In terms of biological role, converts lysophosphatidic acid (LPA) into phosphatidic acid by incorporating acyl moiety at the 2 position. In Neisseria gonorrhoeae, this protein is 1-acyl-sn-glycerol-3-phosphate acyltransferase (plsC).